Reading from the N-terminus, the 171-residue chain is T-cell surface glycoprotein CD3 delta chain (171 aa).

The signal sequence occupies residues 1–21 (MEHSTFLSGLVLATLLSQVSP). Residues 22–105 (FKIPVEELED…CVELDPATLA (84 aa)) lie on the Extracellular side of the membrane. Cysteine 37 and cysteine 73 form a disulfide bridge. Residues asparagine 38, asparagine 54, and asparagine 74 are each glycosylated (N-linked (GlcNAc...) asparagine). The chain crosses the membrane as a helical span at residues 106-126 (GIIVTDVIATLLLALGVFCFA). The Cytoplasmic portion of the chain corresponds to 127–171 (GHETGRLSGAADTQALLRNDQVYQPLRDRDDAQYSRLGGNWARNK). One can recognise an ITAM domain in the interval 138–166 (DTQALLRNDQVYQPLRDRDDAQYSRLGGN). Residues tyrosine 149 and tyrosine 160 each carry the phosphotyrosine modification.

As to quaternary structure, the TCR-CD3 complex is composed of a CD3D/CD3E and a CD3G/CD3E heterodimers that preferentially associate with TCRalpha and TCRbeta, respectively, to form TCRalpha/CD3E/CD3G and TCRbeta/CD3G/CD3E trimers. In turn, the hexamer interacts with CD3Z homodimer to form the TCR-CD3 complex. Alternatively, TCRalpha and TCRbeta can be replaced by TCRgamma and TCRdelta. Interacts with coreceptors CD4 and CD8. In terms of processing, phosphorylated on Tyr residues after T-cell receptor triggering by LCK in association with CD4/CD8. As to expression, CD3D is mostly present on T-lymphocytes with its TCR-CD3 partners. Present also in fetal NK-cells.

The protein resides in the cell membrane. Functionally, part of the TCR-CD3 complex present on T-lymphocyte cell surface that plays an essential role in adaptive immune response. When antigen presenting cells (APCs) activate T-cell receptor (TCR), TCR-mediated signals are transmitted across the cell membrane by the CD3 chains CD3D, CD3E, CD3G and CD3Z. All CD3 chains contain immunoreceptor tyrosine-based activation motifs (ITAMs) in their cytoplasmic domain. Upon TCR engagement, these motifs become phosphorylated by Src family protein tyrosine kinases LCK and FYN, resulting in the activation of downstream signaling pathways. In addition of this role of signal transduction in T-cell activation, CD3D plays an essential role in thymocyte differentiation. Indeed, participates in correct intracellular TCR-CD3 complex assembly and surface expression. In absence of a functional TCR-CD3 complex, thymocytes are unable to differentiate properly. Interacts with CD4 and CD8 and thus serves to establish a functional link between the TCR and coreceptors CD4 and CD8, which is needed for activation and positive selection of CD4 or CD8 T-cells. The sequence is that of T-cell surface glycoprotein CD3 delta chain (CD3D) from Macaca fascicularis (Crab-eating macaque).